A 75-amino-acid polypeptide reads, in one-letter code: Anionic peptide (75 aa).

An N-terminal signal peptide occupies residues 1–24; that stretch reads MVSKSLIVLLLVSVLVSTFYTSEA.

Belongs to the non-disulfide-bridged peptide (NDBP) superfamily. In terms of tissue distribution, expressed by the venom gland.

It localises to the secreted. In Tityus discrepans (Venezuelan scorpion), this protein is Anionic peptide.